The following is a 104-amino-acid chain: Large ribosomal subunit protein uL24 (104 aa).

Residues 41–61 (ISKKHKKPTPNEKQSGGIFEK) form a disordered region.

This sequence belongs to the universal ribosomal protein uL24 family. Part of the 50S ribosomal subunit.

Functionally, one of two assembly initiator proteins, it binds directly to the 5'-end of the 23S rRNA, where it nucleates assembly of the 50S subunit. One of the proteins that surrounds the polypeptide exit tunnel on the outside of the subunit. The sequence is that of Large ribosomal subunit protein uL24 from Wigglesworthia glossinidia brevipalpis.